Consider the following 417-residue polypeptide: Cyanophycinase (417 aa).

An N-terminal signal peptide occupies residues M1–A23. Residues S169, D188, and H222 each act as charge relay system in the active site.

It belongs to the peptidase S51 family.

The protein localises to the secreted. It carries out the reaction [L-4-(L-arginin-2-N-yl)aspartate](n) + H2O = [L-4-(L-arginin-2-N-yl)aspartate](n-1) + L-4-(L-arginin-2-N-yl)aspartate. Its activity is regulated as follows. Inhibited by serine protease inhibitors. Inhibited by N-Bromo-succinimide. Its function is as follows. Exopeptidase that catalyzes the hydrolytic cleavage of multi-L-arginyl-poly-L-aspartic acid (cyanophycin; a water-insoluble reserve polymer) into aspartate-arginine dipeptides. This is Cyanophycinase (cphE) from Pseudomonas anguilliseptica.